A 119-amino-acid polypeptide reads, in one-letter code: NAD(P)H-quinone oxidoreductase subunit M (119 aa).

It belongs to the complex I NdhM subunit family. NDH-1 can be composed of about 15 different subunits; different subcomplexes with different compositions have been identified which probably have different functions.

Its subcellular location is the cellular thylakoid membrane. It catalyses the reaction a plastoquinone + NADH + (n+1) H(+)(in) = a plastoquinol + NAD(+) + n H(+)(out). The enzyme catalyses a plastoquinone + NADPH + (n+1) H(+)(in) = a plastoquinol + NADP(+) + n H(+)(out). NDH-1 shuttles electrons from an unknown electron donor, via FMN and iron-sulfur (Fe-S) centers, to quinones in the respiratory and/or the photosynthetic chain. The immediate electron acceptor for the enzyme in this species is believed to be plastoquinone. Couples the redox reaction to proton translocation, and thus conserves the redox energy in a proton gradient. Cyanobacterial NDH-1 also plays a role in inorganic carbon-concentration. The chain is NAD(P)H-quinone oxidoreductase subunit M from Gloeothece citriformis (strain PCC 7424) (Cyanothece sp. (strain PCC 7424)).